The following is a 225-amino-acid chain: 2-C-methyl-D-erythritol 4-phosphate cytidylyltransferase (225 aa).

It belongs to the IspD/TarI cytidylyltransferase family. IspD subfamily.

It carries out the reaction 2-C-methyl-D-erythritol 4-phosphate + CTP + H(+) = 4-CDP-2-C-methyl-D-erythritol + diphosphate. It functions in the pathway isoprenoid biosynthesis; isopentenyl diphosphate biosynthesis via DXP pathway; isopentenyl diphosphate from 1-deoxy-D-xylulose 5-phosphate: step 2/6. In terms of biological role, catalyzes the formation of 4-diphosphocytidyl-2-C-methyl-D-erythritol from CTP and 2-C-methyl-D-erythritol 4-phosphate (MEP). This chain is 2-C-methyl-D-erythritol 4-phosphate cytidylyltransferase, found in Clostridium perfringens (strain ATCC 13124 / DSM 756 / JCM 1290 / NCIMB 6125 / NCTC 8237 / Type A).